The following is a 399-amino-acid chain: S-adenosylmethionine synthase (399 aa).

His17 contributes to the ATP binding site. Asp19 contributes to the Mg(2+) binding site. Glu45 contributes to the K(+) binding site. L-methionine contacts are provided by Glu58 and Gln101. The interval 101–111 (QSADIAMGVDQ) is flexible loop. Residues 177–179 (DGK), 244–245 (RF), Asp253, 259–260 (RK), Ala276, and Lys280 contribute to the ATP site. Position 253 (Asp253) interacts with L-methionine. An L-methionine-binding site is contributed by Lys284.

The protein belongs to the AdoMet synthase family. Homotetramer; dimer of dimers. It depends on Mg(2+) as a cofactor. The cofactor is K(+).

It localises to the cytoplasm. It catalyses the reaction L-methionine + ATP + H2O = S-adenosyl-L-methionine + phosphate + diphosphate. The protein operates within amino-acid biosynthesis; S-adenosyl-L-methionine biosynthesis; S-adenosyl-L-methionine from L-methionine: step 1/1. Catalyzes the formation of S-adenosylmethionine (AdoMet) from methionine and ATP. The overall synthetic reaction is composed of two sequential steps, AdoMet formation and the subsequent tripolyphosphate hydrolysis which occurs prior to release of AdoMet from the enzyme. The protein is S-adenosylmethionine synthase of Bacillus thuringiensis (strain Al Hakam).